Here is a 394-residue protein sequence, read N- to C-terminus: Elongation factor Tu 2 (394 aa).

Residues 10–204 form the tr-type G domain; that stretch reads KPHVNVGTIG…YLDTYIPEPE (195 aa). The interval 19–26 is G1; sequence GHVDHGKT. GTP is bound at residue 19-26; it reads GHVDHGKT. Residue Thr-26 participates in Mg(2+) binding. The tract at residues 60–64 is G2; it reads GITIN. Residues 81 to 84 form a G3 region; that stretch reads DCPG. Residues 81-85 and 136-139 contribute to the GTP site; these read DCPGH and NKCD. The G4 stretch occupies residues 136 to 139; the sequence is NKCD. Residues 174 to 176 form a G5 region; that stretch reads SAL.

This sequence belongs to the TRAFAC class translation factor GTPase superfamily. Classic translation factor GTPase family. EF-Tu/EF-1A subfamily. Monomer.

The protein resides in the cytoplasm. The enzyme catalyses GTP + H2O = GDP + phosphate + H(+). GTP hydrolase that promotes the GTP-dependent binding of aminoacyl-tRNA to the A-site of ribosomes during protein biosynthesis. This chain is Elongation factor Tu 2, found in Yersinia enterocolitica serotype O:8 / biotype 1B (strain NCTC 13174 / 8081).